The chain runs to 1433 residues: MARNNDKNTVQRFNQISIGLASPESILAESRGEVLKPETINYRTHKPERDGLFCERIFGPVKDYECACGKYKRIRYKGIVCDRCGVEVTEKKVRRDRVGHINLVVPVAHIWYFRSLPNKIGYLLGLPSKKLDMIIYYERYVVIQAGNAKNEEGEPLKKMDFLTEEEYLNILDELPQENQYLDDSDPNKFIAKMGAECLIEILKRIDLDELSYELRHKANNETSKQRKTEALKRLQVVEALRDANKNRENNPEWMIMKVVPVIPPELRPLVPLDGGRFATSDLNDLYRRVIIRNNRLKRLMEIKAPEVILRNEKRMLQESVDSLFDNTRKSSAVKTDSNRPLKSLSDSLKGKQGRFRQNLLGKRVDYSARSVIVVGPELKMFECGLPKNMAAELYKPFIIRKLIERGIVKTVKSAKKIIDKKEPVVWDILENVLKGHPVLLNRAPTLHRLGIQAFQPKLIEGKAIQLHPLACTAFNADFDGDQMAVHLPLGPEAILEAQLLMLASHNILNPANGSPITVPSQDMVLGLYYMTKHKKTTKDETVIGEGLTFYSAEELVIAYNQKRVDLNAGIKIRTKDYNEEGELVYMIKDTTVGRVLFNEAVPEKAGYINEVLTKKSLREIIGKILKITSVPETSEFLDEIKGLGYGFAFRGGLSFSLGDIIIPEEKQSMIDEANEQVEGIIGNYNMGLITNNERYNQVIDIWTSTNAGLTDLAMKRIREDKQGFNSVYMMLDSGARGSKEQIRQLTGMRGLMAKPKKSNSGGGEIIENPILSNFKEGLSILEYFISTHGARKGLADTALKTADAGYLTRRLVDVSQDVIVNEDDCGTLRGVEVKPLKKNEEIVESLGERILGRISLNDVVNPSTQEHIVATNEEITEEIVAKIEAAPIESVEVRSPLTCEAKKGICIKCYGRNLATNKIVQTGEAVGVVAAQSIGEPGTQLTLRTFHVGGIAGNISEDNKLEAKFAGVAEIEDLKVVKGEAPDGGTADIVISRTAELKIKDKKTGVVLSNNNIPYGSQININDGATVKEGEVICTWDPYNGVIISEFAGKIKYENVEQGVTYQVEIDEQTGFQEKVISESRNKKLIPTLHILGKKDEVIRSYNLPVGAHLMVDNEEKIGVGKILVKIPRKSSKAGDITGGLPRVTELFEARNPSNPAVVSEIDGVVSFGKIKRGNREIIVESKLGEVKKYLVKLSNQILVQENDYVRAGMPLSDGSITPEDILNIKGPNAVQQYLVNEVQEVYRLQGVKINDKHFEVVVRQMMRKVRIVDPGDTIFLENQLVHKADFIEENNKLFGMKVIEDAGDSEKLKAGQIITPRDLRDENSILRREDKNLATARDVITATANPVLQGITRASLQTKSFISAASFQETTKVLNEAAVSGKIDYLEGLKENVIVGHRIPAGTGMRKYDSIIVGSKEEFDQMLEKKQEVNYN.

Zn(2+)-binding residues include Cys66, Cys68, Cys81, and Cys84. The tract at residues 328 to 347 (RKSSAVKTDSNRPLKSLSDS) is disordered. Residues 329-346 (KSSAVKTDSNRPLKSLSD) show a composition bias toward polar residues. Residues Asp477, Asp479, and Asp481 each contribute to the Mg(2+) site. Residues Cys825, Cys899, Cys906, and Cys909 each contribute to the Zn(2+) site.

The protein belongs to the RNA polymerase beta' chain family. As to quaternary structure, the RNAP catalytic core consists of 2 alpha, 1 beta, 1 beta' and 1 omega subunit. When a sigma factor is associated with the core the holoenzyme is formed, which can initiate transcription. The cofactor is Mg(2+). Zn(2+) serves as cofactor.

The enzyme catalyses RNA(n) + a ribonucleoside 5'-triphosphate = RNA(n+1) + diphosphate. Functionally, DNA-dependent RNA polymerase catalyzes the transcription of DNA into RNA using the four ribonucleoside triphosphates as substrates. The sequence is that of DNA-directed RNA polymerase subunit beta' from Christiangramia forsetii (strain DSM 17595 / CGMCC 1.15422 / KT0803) (Gramella forsetii).